Consider the following 487-residue polypeptide: Berbamunine synthase (487 aa).

Cys-429 contributes to the heme binding site.

The protein belongs to the cytochrome P450 family. Heme serves as cofactor.

It is found in the endoplasmic reticulum membrane. The protein localises to the microsome membrane. The catalysed reaction is (R)-N-methylcoclaurine + (S)-N-methylcoclaurine + reduced [NADPH--hemoprotein reductase] + O2 = berbamunine + oxidized [NADPH--hemoprotein reductase] + 2 H2O + H(+). The protein operates within alkaloid biosynthesis; berbamunine biosynthesis; berbamunine from (R)-N-methylcoclaurine and (S)-N-methylcoclaurine: step 1/1. Functionally, forms the bisbenzylisoquinoline alkaloid berbamunine by phenol oxidation of N-methylcoclaurine without the incorporation of oxygen into the product. Oxidatively couples either two molecules of (R)-N-methylcoclaurine to form the (R,R) dimer guattegaumerine or one molecule each of (R)- and (S)-N-methylcoclaurine to form the (R,S) dimer berbamunine. The protein is Berbamunine synthase (CYP80A1) of Berberis stolonifera (Barberry).